We begin with the raw amino-acid sequence, 529 residues long: Tyrosine--tRNA ligase, cytoplasmic (529 aa).

Tyr39 provides a ligand contact to L-tyrosine. The 'HIGH' region motif lies at 44–52 (TTGKPHVAY). L-tyrosine-binding residues include Tyr166, Gln170, Asp173, and Gln188. The short motif at 222 to 226 (KMSSS) is the 'KMSKS' region element. The Nuclear localization signal signature appears at 242 to 247 (KKKLKK). Residues 335 to 362 (KLTSSAYPEPSKNKGGVKGNPKQTTDDD) are disordered. Positions 365–469 (IPSRLDIRVG…EGSAAGDRVY (105 aa)) constitute a tRNA-binding domain.

The protein belongs to the class-I aminoacyl-tRNA synthetase family. In terms of assembly, homodimer.

The protein resides in the cytoplasm. The protein localises to the nucleus. It carries out the reaction tRNA(Tyr) + L-tyrosine + ATP = L-tyrosyl-tRNA(Tyr) + AMP + diphosphate + H(+). Catalyzes the attachment of tyrosine to tRNA(Tyr) in a two-step reaction: tyrosine is first activated by ATP to form Tyr-AMP and then transferred to the acceptor end of tRNA(Tyr). The protein is Tyrosine--tRNA ligase, cytoplasmic (yars1) of Danio rerio (Zebrafish).